A 253-amino-acid polypeptide reads, in one-letter code: Snake venom serine protease homolog HS120 (253 aa).

Positions 1 to 18 are cleaved as a signal peptide; the sequence is MVLIRVIANLLILQLSYA. Positions 19 to 24 are excised as a propeptide; the sequence is QKSSEL. A Peptidase S1 domain is found at 25–244; sequence VIGGDECNIN…YLPWIQSIIA (220 aa). 6 disulfide bridges follow: cysteine 31/cysteine 158, cysteine 49/cysteine 65, cysteine 98/cysteine 251, cysteine 137/cysteine 205, cysteine 169/cysteine 184, and cysteine 195/cysteine 220. Residues asparagine 116 and asparagine 165 are each glycosylated (N-linked (GlcNAc...) asparagine).

This sequence belongs to the peptidase S1 family. Snake venom subfamily. In terms of tissue distribution, expressed by the venom gland.

It is found in the secreted. Functionally, snake venom serine protease homolog that may act in the hemostasis system of the prey. The protein is Snake venom serine protease homolog HS120 of Bothrops jararaca (Jararaca).